The chain runs to 139 residues: NADPH-dependent 7-cyano-7-deazaguanine reductase (139 aa).

Residue Cys34 is the Thioimide intermediate of the active site. Residue Asp41 is the Proton donor of the active site. Residues 56–58 (IEL) and 75–76 (HE) contribute to the substrate site.

It belongs to the GTP cyclohydrolase I family. QueF type 1 subfamily.

It is found in the cytoplasm. The enzyme catalyses 7-aminomethyl-7-carbaguanine + 2 NADP(+) = 7-cyano-7-deazaguanine + 2 NADPH + 3 H(+). The protein operates within tRNA modification; tRNA-queuosine biosynthesis. Its function is as follows. Catalyzes the NADPH-dependent reduction of 7-cyano-7-deazaguanine (preQ0) to 7-aminomethyl-7-deazaguanine (preQ1). This is NADPH-dependent 7-cyano-7-deazaguanine reductase from Nitrosomonas eutropha (strain DSM 101675 / C91 / Nm57).